The following is a 355-amino-acid chain: S-adenosylmethionine:tRNA ribosyltransferase-isomerase (355 aa).

Belongs to the QueA family. Monomer.

The protein resides in the cytoplasm. The enzyme catalyses 7-aminomethyl-7-carbaguanosine(34) in tRNA + S-adenosyl-L-methionine = epoxyqueuosine(34) in tRNA + adenine + L-methionine + 2 H(+). It participates in tRNA modification; tRNA-queuosine biosynthesis. Functionally, transfers and isomerizes the ribose moiety from AdoMet to the 7-aminomethyl group of 7-deazaguanine (preQ1-tRNA) to give epoxyqueuosine (oQ-tRNA). This chain is S-adenosylmethionine:tRNA ribosyltransferase-isomerase, found in Burkholderia ambifaria (strain ATCC BAA-244 / DSM 16087 / CCUG 44356 / LMG 19182 / AMMD) (Burkholderia cepacia (strain AMMD)).